A 614-amino-acid polypeptide reads, in one-letter code: UvrABC system protein C (614 aa).

Positions 14-91 (TSPGCYIHKD…IKENKPKYNI (78 aa)) constitute a GIY-YIG domain. The UVR domain maps to 196-231 (DKIIDDLKSKMAVAAQSMEFERAAEYRDLIQAIGTL). The disordered stretch occupies residues 595–614 (LPQVAEERVDYQTEGNHNEP). Residues 599–614 (AEERVDYQTEGNHNEP) show a composition bias toward basic and acidic residues.

It belongs to the UvrC family. Interacts with UvrB in an incision complex.

It localises to the cytoplasm. Its function is as follows. The UvrABC repair system catalyzes the recognition and processing of DNA lesions. UvrC both incises the 5' and 3' sides of the lesion. The N-terminal half is responsible for the 3' incision and the C-terminal half is responsible for the 5' incision. This is UvrABC system protein C from Streptococcus pneumoniae serotype 4 (strain ATCC BAA-334 / TIGR4).